We begin with the raw amino-acid sequence, 340 residues long: ATP synthase subunit a (340 aa).

Residues Met1–Ala32 form the signal peptide. The next 6 membrane-spanning stretches (helical) occupy residues His107–Ser127, Leu172–Ala192, Asn197–Leu217, Ala236–Leu256, Ile269–Val289, and Ile296–Leu316.

The protein belongs to the ATPase A chain family. F-type ATPases have 2 components, CF(1) - the catalytic core - and CF(0) - the membrane proton channel. CF(1) has five subunits: alpha(3), beta(3), gamma(1), delta(1), epsilon(1). CF(0) has four main subunits: a, b, b' and c.

The protein resides in the cell inner membrane. Its function is as follows. Key component of the proton channel; it plays a direct role in the translocation of protons across the membrane. This chain is ATP synthase subunit a, found in Pelodictyon phaeoclathratiforme (strain DSM 5477 / BU-1).